Consider the following 215-residue polypeptide: Probable transaldolase (215 aa).

Lysine 83 serves as the catalytic Schiff-base intermediate with substrate.

The protein belongs to the transaldolase family. Type 3B subfamily.

The protein resides in the cytoplasm. The catalysed reaction is D-sedoheptulose 7-phosphate + D-glyceraldehyde 3-phosphate = D-erythrose 4-phosphate + beta-D-fructose 6-phosphate. It participates in carbohydrate degradation; pentose phosphate pathway; D-glyceraldehyde 3-phosphate and beta-D-fructose 6-phosphate from D-ribose 5-phosphate and D-xylulose 5-phosphate (non-oxidative stage): step 2/3. In terms of biological role, transaldolase is important for the balance of metabolites in the pentose-phosphate pathway. This Clostridium kluyveri (strain NBRC 12016) protein is Probable transaldolase.